Here is a 289-residue protein sequence, read N- to C-terminus: (3R)-3-[(carboxymethyl)amino]fatty acid oxygenase/decarboxylase (289 aa).

Tyr-65, Tyr-70, and Gly-93 together coordinate a (3R)-3-[(carboxymethyl)amino]fatty acid. The Fe(2+) site is built by His-97 and Asp-99. A (3R)-3-[(carboxymethyl)amino]fatty acid is bound by residues Tyr-100 and Lys-158. His-260 serves as a coordination point for Fe(2+). A 2-oxoglutarate-binding site is contributed by His-264. Arg-275 provides a ligand contact to a (3R)-3-[(carboxymethyl)amino]fatty acid.

This sequence belongs to the TfdA dioxygenase family. Requires Fe(2+) as cofactor.

It carries out the reaction a (3R)-3-[(carboxymethyl)amino]fatty acid + 2 2-oxoglutarate + 2 O2 = a (3R)-3-isocyanyl-fatty acid + 2 succinate + 3 CO2 + 2 H2O. The catalysed reaction is a (3R)-3-[(carboxymethyl)amino]fatty acid + 2-oxoglutarate + O2 = a (3R)-3-{[carboxy(hydroxy)methyl]amino}fatty acid + succinate + CO2. The enzyme catalyses a (3R)-3-{[carboxy(hydroxy)methyl]amino}fatty acid + 2-oxoglutarate + O2 = a (3R)-3-isocyanyl-fatty acid + succinate + 2 CO2 + 2 H2O. Involved in the biosynthesis of a unique class of isonitrile lipopeptides (INLPs) that seem to play a role in metal acquisition. Catalyzes the conversion of (3R)-3-[(carboxymethyl)amino]fatty acids to (3R)-3-isocyanyl-fatty acids through an oxidative decarboxylation mechanism, thereby generating the isonitrile group of INLPs. This is (3R)-3-[(carboxymethyl)amino]fatty acid oxygenase/decarboxylase from Mycobacterium bovis (strain ATCC BAA-935 / AF2122/97).